The following is a 465-amino-acid chain: Serine hydroxymethyltransferase (465 aa).

Lys-241 is modified (N6-(pyridoxal phosphate)lysine).

It belongs to the SHMT family. As to quaternary structure, homotetramer. Pyridoxal 5'-phosphate serves as cofactor. Highest expression in the ovary and testis. 6- to 7-fold lower expression in hemocyte, silk gland, midgut and fat body.

The catalysed reaction is (6R)-5,10-methylene-5,6,7,8-tetrahydrofolate + glycine + H2O = (6S)-5,6,7,8-tetrahydrofolate + L-serine. The protein operates within one-carbon metabolism; tetrahydrofolate interconversion. Functionally, interconversion of serine and glycine. In Bombyx mori (Silk moth), this protein is Serine hydroxymethyltransferase (692975).